The sequence spans 232 residues: U-scoloptoxin(11)-Ssd2a (232 aa).

A signal peptide spans 1-21 (MFQFCLLILLLAPGRFFSALG). A propeptide spanning residues 22–32 (KPQETLTVENR) is cleaved from the precursor.

Post-translationally, contains 8 disulfide bonds. Expressed by the venom gland.

The protein localises to the secreted. In Scolopendra dehaani (Thai centipede), this protein is U-scoloptoxin(11)-Ssd2a.